A 331-amino-acid chain; its full sequence is Ribose-phosphate pyrophosphokinase (331 aa).

55–57 (DGE) contacts ATP. The Mg(2+) site is built by His148 and Asp187. The active site involves Lys211. Residues Arg213, Asp237, and 241 to 245 (DTGGT) contribute to the D-ribose 5-phosphate site.

This sequence belongs to the ribose-phosphate pyrophosphokinase family. Class I subfamily. In terms of assembly, homohexamer. Mg(2+) is required as a cofactor.

Its subcellular location is the cytoplasm. It carries out the reaction D-ribose 5-phosphate + ATP = 5-phospho-alpha-D-ribose 1-diphosphate + AMP + H(+). It functions in the pathway metabolic intermediate biosynthesis; 5-phospho-alpha-D-ribose 1-diphosphate biosynthesis; 5-phospho-alpha-D-ribose 1-diphosphate from D-ribose 5-phosphate (route I): step 1/1. Functionally, involved in the biosynthesis of the central metabolite phospho-alpha-D-ribosyl-1-pyrophosphate (PRPP) via the transfer of pyrophosphoryl group from ATP to 1-hydroxyl of ribose-5-phosphate (Rib-5-P). The chain is Ribose-phosphate pyrophosphokinase from Parasynechococcus marenigrum (strain WH8102).